A 660-amino-acid chain; its full sequence is MTGGRFDFDDGGTYCGGWEEGKAHGHGICTGPKGQGEYSGSWSHGFEVVGVYTWPSGNTYQGYWAQGKRHGLGVETKGKWMYRGEWSHGFKGRYGVRQSLCTPARYEGTWSNGLQDGYGVETYGDGGTYQGQWAGGMRHGYGVRQSVPYGMATVIRSPLRTSLASLRSEQSNGSVLHEAAAAAADSPAGTRGGFVLNFHADTELGKKKGGLFRRGSLLGSMKLRKSESKSSISSKRSSVRSDAAMSRISSSDANSTISFGDVDCDFCPVEDHVDATTTETYMGEWKNDKRNGFGISERSNGMKYEGEWANNKRHGYGCTVFPDGSKEEGKYKNNILVRGIRKQLIPIRNTKTREKVDRAIEGAQRAAAMARTKVEIANSRTAHARAKADAADQAALAARQECDIARAVARELSPDFYQPGPDYIKQRCQEGGDIKENPEEKVLEKPPSPKESPHFYRKGTTPPRSPESSPKQSHSPQPSSPEPSKKQNPSPGARLSQDKQSLAEEQVTAFVNKPSMSKAPAKELGASVSKYSGRHHVPNPSNGELHSQYHGYYVKLNTPQHPPEDREDDRGVSQSSSALVPRPSPNKWGPPKSVTKPVAKESKTEPKAKKSELAIPKNPASNDTCPSLEKEANSGPNSIMIVLVMLLNIGLAILFVHFLT.

The Cytoplasmic portion of the chain corresponds to 1–638 (MTGGRFDFDD…EKEANSGPNS (638 aa)). MORN repeat units lie at residues 14–36 (YCGGWEEGKAHGHGICTGPKGQG), 38–59 (YSGSWSHGFEVVGVYTWPSGNT), 60–82 (YQGYWAQGKRHGLGVETKGKWMY), 106–128 (YEGTWSNGLQDGYGVETYGDGGT), and 129–151 (YQGQWAGGMRHGYGVRQSVPYGM). Residues serine 157, serine 216, and serine 220 each carry the phosphoserine modification. Positions 228–247 (SKSSISSKRSSVRSDAAMSR) are disordered. MORN repeat units follow at residues 281 to 303 (YMGEWKNDKRNGFGISERSNGMK) and 304 to 326 (YEGEWANNKRHGYGCTVFPDGSK). Positions 437 to 454 (NPEEKVLEKPPSPKESPH) are enriched in basic and acidic residues. The interval 437-631 (NPEEKVLEKP…NDTCPSLEKE (195 aa)) is disordered. Serine 452 is subject to Phosphoserine. Threonine 461 carries the post-translational modification Phosphothreonine. Residues serine 465, serine 469, and serine 475 each carry the phosphoserine modification. A compositionally biased stretch (low complexity) spans 466 to 477 (PESSPKQSHSPQ). Composition is skewed to basic and acidic residues over residues 562-571 (PPEDREDDRG) and 598-612 (VAKESKTEPKAKKSE). Residues 639 to 659 (IMIVLVMLLNIGLAILFVHFL) traverse the membrane as a helical; Anchor for type IV membrane protein segment.

This sequence belongs to the junctophilin family. In terms of tissue distribution, specifically expressed in skeletal muscle. Weakly expressed in embryos and neonates. Abundant in young adult muscles.

It localises to the cell membrane. The protein localises to the endoplasmic reticulum membrane. Its subcellular location is the sarcoplasmic reticulum membrane. Junctophilins contribute to the formation of junctional membrane complexes (JMCs) which link the plasma membrane with the endoplasmic or sarcoplasmic reticulum in excitable cells. Provides a structural foundation for functional cross-talk between the cell surface and intracellular calcium release channels. JPH1 contributes to the construction of the skeletal muscle triad by linking the t-tubule (transverse-tubule) and SR (sarcoplasmic reticulum) membranes. This is Junctophilin-1 (Jph1) from Mus musculus (Mouse).